Here is a 245-residue protein sequence, read N- to C-terminus: Glucan endo-1,3-beta-glucosidase (245 aa).

A signal peptide spans 1–23 (MMKTLVVVLSLSLTILSFGGAHA). Cystine bridges form between cysteine 32–cysteine 244, cysteine 80–cysteine 90, cysteine 95–cysteine 102, cysteine 150–cysteine 233, cysteine 155–cysteine 216, cysteine 163–cysteine 179, cysteine 183–cysteine 192, and cysteine 193–cysteine 203.

The protein belongs to the thaumatin family. As to expression, abundantly expressed in ripening fruit.

It localises to the secreted. The enzyme catalyses Hydrolysis of (1-&gt;3)-beta-D-glucosidic linkages in (1-&gt;3)-beta-D-glucans.. In Prunus avium (Cherry), this protein is Glucan endo-1,3-beta-glucosidase.